A 177-amino-acid chain; its full sequence is Chorismate pyruvate-lyase (177 aa).

The substrate site is built by Met36, Arg78, Leu116, and Glu157.

The protein belongs to the UbiC family. Monomer.

It localises to the cytoplasm. The catalysed reaction is chorismate = 4-hydroxybenzoate + pyruvate. Its pathway is cofactor biosynthesis; ubiquinone biosynthesis. Functionally, removes the pyruvyl group from chorismate, with concomitant aromatization of the ring, to provide 4-hydroxybenzoate (4HB) for the ubiquinone pathway. The polypeptide is Chorismate pyruvate-lyase (Pectobacterium carotovorum subsp. carotovorum (strain PC1)).